Reading from the N-terminus, the 204-residue chain is N-(5'-phosphoribosyl)anthranilate isomerase (204 aa).

The protein belongs to the TrpF family.

The catalysed reaction is N-(5-phospho-beta-D-ribosyl)anthranilate = 1-(2-carboxyphenylamino)-1-deoxy-D-ribulose 5-phosphate. It participates in amino-acid biosynthesis; L-tryptophan biosynthesis; L-tryptophan from chorismate: step 3/5. The sequence is that of N-(5'-phosphoribosyl)anthranilate isomerase from Syntrophomonas wolfei subsp. wolfei (strain DSM 2245B / Goettingen).